The following is a 76-amino-acid chain: Acyl carrier protein (76 aa).

Positions 1-76 constitute a Carrier domain; it reads MAIFDDIKEV…DVVRYIETNK (76 aa). Position 36 is an O-(pantetheine 4'-phosphoryl)serine (S36).

This sequence belongs to the acyl carrier protein (ACP) family. 4'-phosphopantetheine is transferred from CoA to a specific serine of apo-ACP by AcpS. This modification is essential for activity because fatty acids are bound in thioester linkage to the sulfhydryl of the prosthetic group.

The protein localises to the cytoplasm. Its pathway is lipid metabolism; fatty acid biosynthesis. Its function is as follows. Carrier of the growing fatty acid chain in fatty acid biosynthesis. This is Acyl carrier protein from Wolinella succinogenes (strain ATCC 29543 / DSM 1740 / CCUG 13145 / JCM 31913 / LMG 7466 / NCTC 11488 / FDC 602W) (Vibrio succinogenes).